Reading from the N-terminus, the 307-residue chain is MDKRALKERLSRVGRVAVLAGGRSAERAVSLKSGAAVHAGLRNLGLLAELVDPADKSVDTLRGFDAAFIALHGRGGEDGVIQGVLEHLEIPYTGSGVMASAIGMDKVRTKQLWKGAGLPTPAFYVAGREEAELGFPVIVKPAHEGSSIGMAKADNTEELGEALVAAEKFDQDVLVEAWVNGPEYTVAVLGDEALPAIRLQTPHVFYDFEAKYQSDSTEYLCPAGLDDADEQALRTLALTAFRVAGCRGWGRVDVMRDEQGQWQLLEVNTVPGMTDHSLVPMAAKATGRDFDVLVGEILLDALERGRG.

The ATP-grasp domain occupies 110–299 (KQLWKGAGLP…FDVLVGEILL (190 aa)). 136–185 (PVIVKPAHEGSSIGMAKADNTEELGEALVAAEKFDQDVLVEAWVNGPEYT) contacts ATP. Mg(2+)-binding residues include D253, E266, and N268.

This sequence belongs to the D-alanine--D-alanine ligase family. Mg(2+) is required as a cofactor. It depends on Mn(2+) as a cofactor.

It localises to the cytoplasm. The enzyme catalyses 2 D-alanine + ATP = D-alanyl-D-alanine + ADP + phosphate + H(+). The protein operates within cell wall biogenesis; peptidoglycan biosynthesis. Functionally, cell wall formation. This chain is D-alanine--D-alanine ligase, found in Alcanivorax borkumensis (strain ATCC 700651 / DSM 11573 / NCIMB 13689 / SK2).